A 346-amino-acid polypeptide reads, in one-letter code: uncharacterized protein (346 aa).

The protein belongs to the PhyH family.

It localises to the cytoplasm. This is an uncharacterized protein from Saccharomyces cerevisiae (strain ATCC 204508 / S288c) (Baker's yeast).